The primary structure comprises 287 residues: uncharacterized protein (287 aa).

Positions methionine 1–asparagine 17 are enriched in basic and acidic residues. Residues methionine 1–phenylalanine 29 are disordered. Residues leucine 38–glycine 60 traverse the membrane as a helical segment.

It is found in the membrane. This is an uncharacterized protein from Escherichia coli O6:H1 (strain CFT073 / ATCC 700928 / UPEC).